We begin with the raw amino-acid sequence, 315 residues long: Ribosomal RNA small subunit methyltransferase H (315 aa).

S-adenosyl-L-methionine is bound by residues 33–35 (GGH), Asp52, Phe84, Asp106, and Gln113.

The protein belongs to the methyltransferase superfamily. RsmH family.

It localises to the cytoplasm. The catalysed reaction is cytidine(1402) in 16S rRNA + S-adenosyl-L-methionine = N(4)-methylcytidine(1402) in 16S rRNA + S-adenosyl-L-homocysteine + H(+). Functionally, specifically methylates the N4 position of cytidine in position 1402 (C1402) of 16S rRNA. This Lactobacillus acidophilus (strain ATCC 700396 / NCK56 / N2 / NCFM) protein is Ribosomal RNA small subunit methyltransferase H.